We begin with the raw amino-acid sequence, 250 residues long: 2,5-dichloro-2,5-cyclohexadiene-1,4-diol dehydrogenase LinX (250 aa).

Residues Asp-38, Asp-64, Val-65, Tyr-156, Lys-160, Thr-191, and Thr-194 each contribute to the NAD(+) site. Tyr-156 serves as the catalytic Proton acceptor.

This sequence belongs to the short-chain dehydrogenases/reductases (SDR) family.

The enzyme catalyses 2,5-dichlorocyclohexa-2,5-dien-1,4-diol + NAD(+) = 2,5-dichlorohydroquinone + NADH + H(+). In terms of biological role, catalyzes the degradation of 2,5-dichloro-2,5-cyclohexadiene-1,4-diol (2,5-DDOL) into 2,5-dichlorohydroquinone (2,5-DCHQ) in vitro. LinX appears not to be involved in gamma-hexachlorocyclohexane (gamma-HCH) degradation pathway, in contrast to LinC which has the same enzymatic activity. The polypeptide is 2,5-dichloro-2,5-cyclohexadiene-1,4-diol dehydrogenase LinX (Sphingobium indicum (strain DSM 16412 / CCM 7286 / MTCC 6364 / B90A)).